We begin with the raw amino-acid sequence, 447 residues long: Polyamine export protein (447 aa).

The Cytoplasmic segment spans residues methionine 1–serine 4. Residues methionine 1 to glutamate 197 enclose the CNNM transmembrane domain. The helical transmembrane segment at isoleucine 5–leucine 25 threads the bilayer. At alanine 26–proline 54 the chain is on the periplasmic side. A helical transmembrane segment spans residues glycine 55–valine 75. Topologically, residues glycine 76–glutamine 99 are cytoplasmic. Residues leucine 100–threonine 120 traverse the membrane as a helical segment. At proline 121–arginine 141 the chain is on the periplasmic side. Residues phenylalanine 142–phenylalanine 162 form a helical membrane-spanning segment. The Cytoplasmic portion of the chain corresponds to arginine 163 to alanine 447. CBS domains follow at residues methionine 216–methionine 275 and glutamine 282–glutamate 343.

The protein belongs to the UPF0053 family. PaeA subfamily.

It is found in the cell inner membrane. Functionally, involved in cadaverine and putrescine tolerance in stationary phase. May facilitate the efflux of both cadaverine and putrescine from the cytoplasm, reducing potentially toxic levels under certain stress conditions. In Salmonella typhimurium (strain 14028s / SGSC 2262), this protein is Polyamine export protein.